The following is a 997-amino-acid chain: Mannuronan C5-epimerase AlgE5 (997 aa).

PbH1 repeat units follow at residues 133 to 155, 157 to 179, 180 to 202, 204 to 226, 257 to 279, 280 to 315, and 320 to 359; these read DRDV…DPHE, TINL…VADF, QIGG…NIVT, TNDF…VIQR, AHDV…RVYG, AEDV…GVSG, and TTGT…SVSN. Hemolysin-type calcium-binding repeat units follow at residues 388 to 403, 406 to 422, 424 to 439, 557 to 573, 574 to 590, 695 to 709, 712 to 729, 828 to 839, 846 to 862, and 864 to 880; these read GTTG…AHET, GLDG…NDIL, GGAG…GADL, GHAG…DDIL, VGGA…GADL, GSAG…AADE, HGGA…ADVF, GSDGNDTLDGGS, GGAG…NDIL, and GGAG…SDIF.

The protein belongs to the D-mannuronate C5-epimerase family. The cofactor is Ca(2+).

The protein localises to the secreted. It carries out the reaction [(1-&gt;4)-beta-D-mannuronosyl](n) = [alginate](n). Its pathway is glycan biosynthesis; alginate biosynthesis. With respect to regulation, inhibited by zinc. Functionally, converts beta-D-mannuronic acid (M) to alpha-L-guluronic acid (G), producing a polymer with gel-forming capacity, required for the formation of the cyst coat. The polypeptide is Mannuronan C5-epimerase AlgE5 (Azotobacter vinelandii).